Consider the following 332-residue polypeptide: 4-hydroxy-3-methylbut-2-enyl diphosphate reductase (332 aa).

Cys-34 is a binding site for [4Fe-4S] cluster. (2E)-4-hydroxy-3-methylbut-2-enyl diphosphate contacts are provided by His-63 and His-96. His-63 and His-96 together coordinate dimethylallyl diphosphate. The isopentenyl diphosphate site is built by His-63 and His-96. Cys-118 contributes to the [4Fe-4S] cluster binding site. Residue His-146 participates in (2E)-4-hydroxy-3-methylbut-2-enyl diphosphate binding. Residue His-146 participates in dimethylallyl diphosphate binding. His-146 is an isopentenyl diphosphate binding site. The Proton donor role is filled by Glu-148. Position 186 (Thr-186) interacts with (2E)-4-hydroxy-3-methylbut-2-enyl diphosphate. Cys-216 lines the [4Fe-4S] cluster pocket. Residues Ser-244, Ser-245, Asn-246, and Ser-289 each coordinate (2E)-4-hydroxy-3-methylbut-2-enyl diphosphate. Dimethylallyl diphosphate is bound by residues Ser-244, Ser-245, Asn-246, and Ser-289. 4 residues coordinate isopentenyl diphosphate: Ser-244, Ser-245, Asn-246, and Ser-289.

This sequence belongs to the IspH family. [4Fe-4S] cluster is required as a cofactor.

It catalyses the reaction isopentenyl diphosphate + 2 oxidized [2Fe-2S]-[ferredoxin] + H2O = (2E)-4-hydroxy-3-methylbut-2-enyl diphosphate + 2 reduced [2Fe-2S]-[ferredoxin] + 2 H(+). The enzyme catalyses dimethylallyl diphosphate + 2 oxidized [2Fe-2S]-[ferredoxin] + H2O = (2E)-4-hydroxy-3-methylbut-2-enyl diphosphate + 2 reduced [2Fe-2S]-[ferredoxin] + 2 H(+). It functions in the pathway isoprenoid biosynthesis; dimethylallyl diphosphate biosynthesis; dimethylallyl diphosphate from (2E)-4-hydroxy-3-methylbutenyl diphosphate: step 1/1. It participates in isoprenoid biosynthesis; isopentenyl diphosphate biosynthesis via DXP pathway; isopentenyl diphosphate from 1-deoxy-D-xylulose 5-phosphate: step 6/6. Its function is as follows. Catalyzes the conversion of 1-hydroxy-2-methyl-2-(E)-butenyl 4-diphosphate (HMBPP) into a mixture of isopentenyl diphosphate (IPP) and dimethylallyl diphosphate (DMAPP). Acts in the terminal step of the DOXP/MEP pathway for isoprenoid precursor biosynthesis. This Mycobacterium ulcerans (strain Agy99) protein is 4-hydroxy-3-methylbut-2-enyl diphosphate reductase.